The sequence spans 153 residues: Superoxide dismutase [Cu-Zn] (153 aa).

The Cu cation site is built by H45, H47, and H62. The cysteines at positions 56 and 145 are disulfide-linked. Residues H62, H70, H79, and D82 each coordinate Zn(2+). Position 119 (H119) interacts with Cu cation.

It belongs to the Cu-Zn superoxide dismutase family. In terms of assembly, homodimer. The cofactor is Cu cation. It depends on Zn(2+) as a cofactor.

The protein localises to the cytoplasm. It carries out the reaction 2 superoxide + 2 H(+) = H2O2 + O2. Destroys radicals which are normally produced within the cells and which are toxic to biological systems. This chain is Superoxide dismutase [Cu-Zn], found in Drosophila willistoni (Fruit fly).